The sequence spans 80 residues: Putative defensin-like protein 15 (80 aa).

The signal sequence occupies residues 1 to 29; the sequence is MAKFASIITFIYAALVLFAAFEVPTMVEA. Glutamine 30 is subject to Pyrrolidone carboxylic acid. 4 disulfide bridges follow: cysteine 33–cysteine 80, cysteine 44–cysteine 65, cysteine 50–cysteine 74, and cysteine 54–cysteine 76.

It belongs to the DEFL family.

The protein resides in the secreted. In terms of biological role, confers broad-spectrum resistance to pathogens. This chain is Putative defensin-like protein 15 (PDF1.2B), found in Arabidopsis thaliana (Mouse-ear cress).